The following is an 802-amino-acid chain: MASRHYSAKNTTKKIRNIGIIAHIDAGKTTTTERILYLSGTIKHLGNVDEGDTTMDFLPAERERGITIASAATSFNWNNHTVNLIDTPGHADFTFEVIRSIRVLDGAVCILDGVAGVEAQTEKVWKQASEMGIPKIAFVNKMDRAGAGFGRTVKEIVSKLRTRVALLTVPVFSKSSDQVFEGVVDILNGCVITWTTGGDGKQTVVVPVSEASAEVQEEYQKARTALVETLTELDEELVEKFLESEDYMQITTEDIKRALRTATINNDIVPVLCGASFRNIGVQPLMDAVVDFLPSPAERPPTDALIAKSYTGGKKSKVIPERAITLDDSMKNLCCALCFKVVQDPQKGTLVYVRVYKGELKQNSVLYNTTSGTKDRVSRLLKVHADTTSEVTSITEGNIGVILGSQGLATGDTIVCHSIKKDGVMKLPPDNRLIQLKPIAVPPPVFFVRIDPASIGDTRPMNEALELLLREDPSLNVSFDDETNQTTLSGMGELHLEIAQNRLIEDFKANIVIGPIIISYKETLNEPTKSITKTVEPEPGAVSTVRLRLEPITEMDEACENENVIDHEQNTVSFPYELSDADLESVGEGNQRISFERDTKELTPEIMEECFRVGSIPPLVSCGPVCRLPLRSVRVVIEAWHIAQHINNTASLKTATRLAIMEALSTANATLMEPIMNVYVSVNEADIGLVVKDLSGSRNGQIVSIMDPSQLNEGDIHSEEYVAMATNTYVPADYTMYLSKHQDQTRTQQSVVHARVPLREMVGYLKTLRSMTQGRGSFTMEVDQYEAVTPDKIQPIVDSIFA.

The tr-type G domain occupies 13–297; the sequence is KKIRNIGIIA…AVVDFLPSPA (285 aa). GTP-binding positions include 22–29, 86–90, and 140–143; these read AHIDAGKT, DTPGH, and NKMD.

The protein belongs to the TRAFAC class translation factor GTPase superfamily. Classic translation factor GTPase family. EF-G/EF-2 subfamily.

The protein localises to the mitochondrion. In terms of biological role, mitochondrial GTPase that mediates the disassembly of ribosomes from messenger RNA at the termination of mitochondrial protein biosynthesis. Not involved in the GTP-dependent ribosomal translocation step during translation elongation. This Yarrowia lipolytica (strain CLIB 122 / E 150) (Yeast) protein is Ribosome-releasing factor 2, mitochondrial.